Here is a 294-residue protein sequence, read N- to C-terminus: ATP synthase gamma chain (294 aa).

Belongs to the ATPase gamma chain family. As to quaternary structure, F-type ATPases have 2 components, CF(1) - the catalytic core - and CF(0) - the membrane proton channel. CF(1) has five subunits: alpha(3), beta(3), gamma(1), delta(1), epsilon(1). CF(0) has three main subunits: a, b and c.

The protein resides in the cell inner membrane. In terms of biological role, produces ATP from ADP in the presence of a proton gradient across the membrane. The gamma chain is believed to be important in regulating ATPase activity and the flow of protons through the CF(0) complex. The sequence is that of ATP synthase gamma chain from Campylobacter lari (strain RM2100 / D67 / ATCC BAA-1060).